The chain runs to 369 residues: Glycolate oxidase 5 (369 aa).

The FMN hydroxy acid dehydrogenase domain maps to 1–360 (MGEITNVTEY…TRNHVITEAD (360 aa)). Tyr25 contacts glyoxylate. Residues 78–80 (PSA), Ser107, 128–130 (QLY), and Thr156 each bind FMN. Tyr130 is a binding site for glyoxylate. Arg165 provides a ligand contact to glyoxylate. Residues Lys231 and Ser253 each coordinate FMN. Positions 255 and 258 each coordinate glyoxylate. His255 serves as the catalytic Proton acceptor. FMN is bound by residues 286 to 290 (DGGVR) and 309 to 310 (GR). Positions 367 to 369 (SRL) match the Microbody targeting signal motif.

The protein belongs to the FMN-dependent alpha-hydroxy acid dehydrogenase family. In terms of assembly, homotetramer. The cofactor is FMN.

It localises to the peroxisome. The catalysed reaction is glycolate + O2 = glyoxylate + H2O2. Its pathway is photosynthesis; photorespiration; glycine from 2-phosphoglycolate: step 2/3. Catalyzes the oxidation of glycolate to glyoxylate, with a reduction of O2 to H2O2. Is a key enzyme in photorespiration in green plants. In Oryza sativa subsp. japonica (Rice), this protein is Glycolate oxidase 5 (GLO5).